The chain runs to 567 residues: Urease subunit alpha (567 aa).

Residues 129–567 form the Urease domain; it reads GGVDSHIHFI…LPLAQRYFLF (439 aa). Ni(2+)-binding residues include His134, His136, and Lys217. An N6-carboxylysine modification is found at Lys217. His219 is a binding site for substrate. The Ni(2+) site is built by His246 and His272. Residue His320 is the Proton donor of the active site. Position 360 (Asp360) interacts with Ni(2+).

The protein belongs to the metallo-dependent hydrolases superfamily. Urease alpha subunit family. Heterotrimer of UreA (gamma), UreB (beta) and UreC (alpha) subunits. Three heterotrimers associate to form the active enzyme. The cofactor is Ni cation. Carboxylation allows a single lysine to coordinate two nickel ions.

The protein resides in the cytoplasm. It catalyses the reaction urea + 2 H2O + H(+) = hydrogencarbonate + 2 NH4(+). The protein operates within nitrogen metabolism; urea degradation; CO(2) and NH(3) from urea (urease route): step 1/1. The chain is Urease subunit alpha from Pseudomonas putida (strain ATCC 47054 / DSM 6125 / CFBP 8728 / NCIMB 11950 / KT2440).